The primary structure comprises 419 residues: 2-amino-3-ketobutyrate coenzyme A ligase, mitochondrial (419 aa).

A mitochondrion-targeting transit peptide spans 1-21 (MWPGNAWRAALFWVPRGRRAQ). Lys-45 is subject to N6-acetyllysine; alternate. Residue Lys-45 is modified to N6-succinyllysine; alternate. 134–135 (CY) lines the pyridoxal 5'-phosphate pocket. His-159 is a substrate binding site. Position 187 is an N6-acetyllysine; alternate (Lys-187). Lys-187 bears the N6-succinyllysine; alternate mark. Residues Ser-206, 262-265 (TLGK), and 295-296 (SN) each bind pyridoxal 5'-phosphate. Lys-265 is modified (N6-(pyridoxal phosphate)lysine). N6-succinyllysine occurs at positions 326 and 368. At Lys-383 the chain carries N6-acetyllysine; alternate. N6-succinyllysine; alternate is present on Lys-383. Arg-389 provides a ligand contact to substrate.

It belongs to the class-II pyridoxal-phosphate-dependent aminotransferase family. The cofactor is pyridoxal 5'-phosphate. In terms of tissue distribution, strongly expressed in heart, brain, liver and pancreas. Also found in lung.

It is found in the mitochondrion. The protein localises to the nucleus. It carries out the reaction glycine + acetyl-CoA = (2S)-2-amino-3-oxobutanoate + CoA. Its function is as follows. Pyridoxal phosphate (PLP) dependent enzyme, which catalyzes the cleavage of 2-amino-3-oxobutanoate to glycine and acetyl-CoA. This Homo sapiens (Human) protein is 2-amino-3-ketobutyrate coenzyme A ligase, mitochondrial.